The sequence spans 362 residues: NAD(P)H-quinone oxidoreductase subunit 1, chloroplastic (362 aa).

A run of 8 helical transmembrane segments spans residues 27 to 47 (IWILPILALLLGITIEVLVIV), 103 to 123 (IAVISILLSFLVIPLGYHFVL), 128 to 148 (IGVFLWIAISSIAPIGLLMAG), 164 to 184 (AAQSISYEIPLTFCVLAISLL), 202 to 222 (FFGWNLWRQPIGFLVFLISSL), 247 to 267 (YSGIKYGLFYLVSYLNLLVSS), 303 to 323 (VIGIFITLTKAYLFLFISITI), and 342 to 362 (FLLPISLGNLLLTTSFQLVSL).

It belongs to the complex I subunit 1 family. NDH is composed of at least 16 different subunits, 5 of which are encoded in the nucleus.

Its subcellular location is the plastid. It is found in the chloroplast thylakoid membrane. The enzyme catalyses a plastoquinone + NADH + (n+1) H(+)(in) = a plastoquinol + NAD(+) + n H(+)(out). It catalyses the reaction a plastoquinone + NADPH + (n+1) H(+)(in) = a plastoquinol + NADP(+) + n H(+)(out). Functionally, NDH shuttles electrons from NAD(P)H:plastoquinone, via FMN and iron-sulfur (Fe-S) centers, to quinones in the photosynthetic chain and possibly in a chloroplast respiratory chain. The immediate electron acceptor for the enzyme in this species is believed to be plastoquinone. Couples the redox reaction to proton translocation, and thus conserves the redox energy in a proton gradient. This is NAD(P)H-quinone oxidoreductase subunit 1, chloroplastic from Saccharum hybrid (Sugarcane).